We begin with the raw amino-acid sequence, 219 residues long: Ras-related protein Rab-3B (219 aa).

Alanine 2 bears the N-acetylalanine mark. 9 residues coordinate GTP: serine 31, serine 32, valine 33, glycine 34, lysine 35, threonine 36, serine 37, proline 49, and serine 53. Threonine 36 contributes to the Mg(2+) binding site. Positions 45–58 (DTFTPAFVSTVGID) match the Switch 1 motif. Mg(2+) is bound by residues threonine 54 and aspartate 77. Positions 78-96 (TAGQERYRTITTAYYRGAM) match the Switch 2 motif. Glycine 80 is a GTP binding site. The residue at position 86 (threonine 86) is a Phosphothreonine. Positions 135, 136, 138, 166, and 167 each coordinate GTP. Serine 188 and serine 190 each carry phosphoserine. S-geranylgeranyl cysteine attachment occurs at residues cysteine 217 and cysteine 219. Cysteine 219 bears the Cysteine methyl ester mark.

This sequence belongs to the small GTPase superfamily. Rab family. In terms of assembly, interacts with RIMS1, RIMS2, RPH3A and RPH3AL. The GTP-bound form interacts with GAS8/DRC4 (via coiled-coil domains). Interacts with GDI2, CHM and CHML; phosphorylation at Thr-86 disrupts these interactions. Interacts with MADD (via uDENN domain); the GTP-bound form is preferred for interaction. The cofactor is Mg(2+). In terms of processing, phosphorylation of Thr-86 in the switch II region by LRRK2 prevents the association of RAB regulatory proteins, including CHM, CHML and RAB GDP dissociation inhibitor GDI2.

The protein resides in the cell membrane. It localises to the golgi apparatus. It carries out the reaction GTP + H2O = GDP + phosphate + H(+). Its activity is regulated as follows. Regulated by guanine nucleotide exchange factors (GEFs) which promote the exchange of bound GDP for free GTP. Regulated by GTPase activating proteins (GAPs) which increase the GTP hydrolysis activity. Inhibited by GDP dissociation inhibitors (GDIs) which prevent Rab-GDP dissociation. Its function is as follows. The small GTPases Rab are key regulators of intracellular membrane trafficking, from the formation of transport vesicles to their fusion with membranes. Rabs cycle between an inactive GDP-bound form and an active GTP-bound form that is able to recruit to membranes different sets of downstream effectors directly responsible for vesicle formation, movement, tethering and fusion. The polypeptide is Ras-related protein Rab-3B (RAB3B) (Mesocricetus auratus (Golden hamster)).